Consider the following 286-residue polypeptide: Mycolic acid methyltransferase MmaA1 (286 aa).

S-adenosyl-L-methionine contacts are provided by residues 32-33, 71-73, 93-98, and 122-123; these read YT, GCG, TLSRNH, and WE. Cys268 is an active-site residue.

This sequence belongs to the CFA/CMAS family.

The protein operates within lipid metabolism; mycolic acid biosynthesis. Its function is as follows. Involved in the conversion of a cis-olefin into a trans-olefin with concomitant introduction of an allylic methyl branch at the proximal position of the precursor to both the methoxy and ketomycolic acids. It directly affects the cis- to trans ratio and indirectly affects the keto to methoxy ratio. The protein is Mycolic acid methyltransferase MmaA1 (cmaD) of Mycobacterium bovis (strain ATCC BAA-935 / AF2122/97).